The sequence spans 729 residues: Sodium-dependent neutral amino acid transporter B(0)AT2 (729 aa).

Residues 1-69 (MPKNSKVVKR…ERPAWNSKLQ (69 aa)) lie on the Cytoplasmic side of the membrane. Phosphoserine occurs at positions 25 and 55. Transmembrane regions (helical) follow at residues 70–90 (YILA…FPYL), 98–117 (AYLL…LFFL), and 142–162 (GIGF…NVII). Over 163-225 (GWTLFYFSQS…SSISESGGLN (63 aa)) the chain is Extracellular. N-linked (GlcNAc...) asparagine glycosylation occurs at asparagine 187. Transmembrane regions (helical) follow at residues 226–244 (WKMT…LAMI), 253–270 (IMYF…CFLI), 306–323 (VFFA…FSSY), and 335–356 (VLVS…FAVL). At 357-452 (GFKANIVNEK…FIAFTEAMTH (96 aa)) the chain is on the extracellular side. N-linked (GlcNAc...) asparagine glycosylation is found at asparagine 383 and asparagine 394. 5 helical membrane-spanning segments follow: residues 453-472 (FPAS…NLGL), 496-514 (ILTV…MFVQ), 530-550 (TLPL…VYGI), 571-592 (YMWK…IVNM), and 620-642 (VVCF…IRRC). Residues 643–729 (NLIDDSSGNL…DMPDMPESDL (87 aa)) are Cytoplasmic-facing. Phosphoserine occurs at positions 687, 699, and 701.

Belongs to the sodium:neurotransmitter symporter (SNF) (TC 2.A.22) family. SLC6A15 subfamily. As to expression, widely distributed in the central nervous system, including the olfactory bulb, the hypothalamus, the cerebral cortex, the hippocampus, and the cerebellum. In addition, intense expression is found in the motor nuclei including the oculomotor nucleus, abducens nucleus, trigeminal motor nucleus, facial nucleus, hypoglossal nucleus and ventral horn of spinal cord. Intense hybridization signals are also observed in the nuclei containing monoaminergic neurons, such as locus coeruleus, the substantia nigra pars compacta, the ventral tegmental area, the dorsal raphe nucleus and the median raphe nucleus.

The protein localises to the membrane. It catalyses the reaction L-leucine(in) + Na(+)(in) = L-leucine(out) + Na(+)(out). The catalysed reaction is L-isoleucine(in) + Na(+)(in) = L-isoleucine(out) + Na(+)(out). It carries out the reaction L-methionine(in) + Na(+)(in) = L-methionine(out) + Na(+)(out). The enzyme catalyses L-proline(in) + Na(+)(in) = L-proline(out) + Na(+)(out). It catalyses the reaction L-alanine(in) + Na(+)(in) = L-alanine(out) + Na(+)(out). The catalysed reaction is L-asparagine(in) + Na(+)(in) = L-asparagine(out) + Na(+)(out). It carries out the reaction L-valine(in) + Na(+)(in) = L-valine(out) + Na(+)(out). The enzyme catalyses L-cysteine(in) + Na(+)(in) = L-cysteine(out) + Na(+)(out). It catalyses the reaction L-glutamine(in) + Na(+)(in) = L-glutamine(out) + Na(+)(out). The catalysed reaction is L-serine(in) + Na(+)(in) = L-serine(out) + Na(+)(out). It carries out the reaction L-threonine(in) + Na(+)(in) = L-threonine(out) + Na(+)(out). The enzyme catalyses L-pipecolate(in) + Na(+)(in) = L-pipecolate(out) + Na(+)(out). It catalyses the reaction L-phenylalanine(in) + Na(+)(in) = L-phenylalanine(out) + Na(+)(out). Functions as a sodium-dependent neutral amino acid transporter. Exhibits preference for the branched-chain amino acids, particularly leucine, valine and isoleucine and methionine. Can also transport low-affinity substrates such as alanine, phenylalanine, glutamine and pipecolic acid. Mediates the saturable, pH-sensitive and electrogenic cotransport of proline and sodium ions with a stoichiometry of 1:1. May have a role as transporter for neurotransmitter precursors into neurons. In contrast to other members of the neurotransmitter transporter family, does not appear to be chloride-dependent. This chain is Sodium-dependent neutral amino acid transporter B(0)AT2 (Slc6a15), found in Rattus norvegicus (Rat).